The chain runs to 468 residues: A-type ATP synthase subunit B (468 aa).

This sequence belongs to the ATPase alpha/beta chains family. Has multiple subunits with at least A(3), B(3), C, D, E, F, H, I and proteolipid K(x).

The protein localises to the cell membrane. Functionally, component of the A-type ATP synthase that produces ATP from ADP in the presence of a proton gradient across the membrane. The B chain is a regulatory subunit. The protein is A-type ATP synthase subunit B of Haloferax volcanii (strain ATCC 29605 / DSM 3757 / JCM 8879 / NBRC 14742 / NCIMB 2012 / VKM B-1768 / DS2) (Halobacterium volcanii).